A 165-amino-acid chain; its full sequence is Nucleotide-binding protein P9301_05061 (165 aa).

The protein belongs to the YajQ family.

Functionally, nucleotide-binding protein. This is Nucleotide-binding protein P9301_05061 from Prochlorococcus marinus (strain MIT 9301).